The primary structure comprises 137 residues: Small ribosomal subunit protein uS9c (137 aa).

The protein belongs to the universal ribosomal protein uS9 family.

Its subcellular location is the plastid. It is found in the chloroplast. This Chlorella vulgaris (Green alga) protein is Small ribosomal subunit protein uS9c (rps9).